The following is a 166-amino-acid chain: 2-C-methyl-D-erythritol 2,4-cyclodiphosphate synthase (166 aa).

2 residues coordinate a divalent metal cation: Asp12 and His14. Residues 12-14 (DVH) and 38-39 (HS) contribute to the 4-CDP-2-C-methyl-D-erythritol 2-phosphate site. His46 contacts a divalent metal cation. Residues 60-62 (DIG), 136-139 (TTSE), Phe143, and Arg146 contribute to the 4-CDP-2-C-methyl-D-erythritol 2-phosphate site.

The protein belongs to the IspF family. As to quaternary structure, homotrimer. A divalent metal cation serves as cofactor.

The enzyme catalyses 4-CDP-2-C-methyl-D-erythritol 2-phosphate = 2-C-methyl-D-erythritol 2,4-cyclic diphosphate + CMP. Its pathway is isoprenoid biosynthesis; isopentenyl diphosphate biosynthesis via DXP pathway; isopentenyl diphosphate from 1-deoxy-D-xylulose 5-phosphate: step 4/6. Involved in the biosynthesis of isopentenyl diphosphate (IPP) and dimethylallyl diphosphate (DMAPP), two major building blocks of isoprenoid compounds. Catalyzes the conversion of 4-diphosphocytidyl-2-C-methyl-D-erythritol 2-phosphate (CDP-ME2P) to 2-C-methyl-D-erythritol 2,4-cyclodiphosphate (ME-CPP) with a corresponding release of cytidine 5-monophosphate (CMP). The polypeptide is 2-C-methyl-D-erythritol 2,4-cyclodiphosphate synthase (Xanthomonas axonopodis pv. citri (strain 306)).